We begin with the raw amino-acid sequence, 155 residues long: MLSVMAATLNYIDEQVKGGLILPYFEDIDAEQWQEKIKVLDIYITDEVEGRELNLEARQKDYATNILSYPSDLPAAIIGLMPTLPLGELIICHAVMIREAAEQNKEAVQHISHLLIHGVLHLLGFDHELGQAEQDEMERFEIEILAGLNIPNPYN.

Residues His117, His121, and His127 each contribute to the Zn(2+) site.

It belongs to the endoribonuclease YbeY family. Zn(2+) serves as cofactor.

It is found in the cytoplasm. Functionally, single strand-specific metallo-endoribonuclease involved in late-stage 70S ribosome quality control and in maturation of the 3' terminus of the 16S rRNA. The polypeptide is Endoribonuclease YbeY (Psychrobacter cryohalolentis (strain ATCC BAA-1226 / DSM 17306 / VKM B-2378 / K5)).